A 229-amino-acid chain; its full sequence is ATP synthase subunit a (229 aa).

A run of 6 helical transmembrane segments spans residues 14–34 (LIAI…ALIL), 68–88 (YFPF…LGLF), 98–118 (IVVT…GGLW), 124–144 (FLSI…LVLI), 157–179 (GVRL…GFGF), and 189–209 (NIFP…VAVI).

Belongs to the ATPase A chain family. As to quaternary structure, F-type ATPases have 2 components, CF(1) - the catalytic core - and CF(0) - the membrane proton channel. CF(1) has five subunits: alpha(3), beta(3), gamma(1), delta(1), epsilon(1). CF(0) has three main subunits: a, b and c.

The protein resides in the mitochondrion inner membrane. Its function is as follows. Mitochondrial membrane ATP synthase (F(1)F(0) ATP synthase or Complex V) produces ATP from ADP in the presence of a proton gradient across the membrane which is generated by electron transport complexes of the respiratory chain. F-type ATPases consist of two structural domains, F(1) - containing the extramembraneous catalytic core and F(0) - containing the membrane proton channel, linked together by a central stalk and a peripheral stalk. During catalysis, ATP synthesis in the catalytic domain of F(1) is coupled via a rotary mechanism of the central stalk subunits to proton translocation. Key component of the proton channel; it may play a direct role in the translocation of protons across the membrane. The polypeptide is ATP synthase subunit a (ATPASE6) (Metridium senile (Brown sea anemone)).